Reading from the N-terminus, the 826-residue chain is Arsenite oxidase subunit AioA (826 aa).

3 residues coordinate [3Fe-4S] cluster: cysteine 22, cysteine 25, and cysteine 29. Substrate is bound by residues histidine 196, glutamate 204, arginine 420, and histidine 424.

The protein belongs to the prokaryotic molybdopterin-containing oxidoreductase family. As to quaternary structure, heterodimer consisting of a large and a small subunit. [3Fe-4S] cluster serves as cofactor. Requires Mo-bis(molybdopterin guanine dinucleotide) as cofactor.

It catalyses the reaction 2 oxidized [azurin] + arsenite + H2O = 2 reduced [azurin] + arsenate + 3 H(+). Involved in the detoxification of arsenic. Oxidizes As(III)O3(3-) (arsenite) to the somewhat less toxic As(V)O4(3-) (arsenate). The protein is Arsenite oxidase subunit AioA (aioA) of Alcaligenes faecalis.